The primary structure comprises 239 residues: Short palate, lung and nasal epithelium carcinoma-associated protein 2A (239 aa).

The signal sequence occupies residues 1–20; that stretch reads MVQLWKLVLLCGLLAGTSES. Cysteine 166 and cysteine 209 are disulfide-bonded.

Belongs to the BPI/LBP/Plunc superfamily. Plunc family. Detected in salivary tissues: parotid, submandibular and sublingual glands.

It is found in the secreted. In Bos taurus (Bovine), this protein is Short palate, lung and nasal epithelium carcinoma-associated protein 2A (SPLUNC2A).